The sequence spans 305 residues: Putative lipid kinase SaurJH9_0749 (305 aa).

Residues 3–139 (NKYTHGVLFY…YDVIKINNQY (137 aa)) form the DAGKc domain. ATP is bound by residues Ser-44, 74–80 (GDGTVNE), and Thr-101. Mg(2+) contacts are provided by Ser-220, Asp-223, and Glu-225. Glu-281 acts as the Proton acceptor in catalysis.

Belongs to the diacylglycerol/lipid kinase family. The cofactor is Mg(2+).

In terms of biological role, may catalyze the ATP-dependent phosphorylation of lipids other than diacylglycerol (DAG). The sequence is that of Putative lipid kinase SaurJH9_0749 from Staphylococcus aureus (strain JH9).